Reading from the N-terminus, the 219-residue chain is Large ribosomal subunit protein uL3 (219 aa).

Positions 113 to 142 are disordered; that stretch reads TTKGHGYQGNIHKDNQSRGPMAHGSRYHRR.

The protein belongs to the universal ribosomal protein uL3 family. Part of the 50S ribosomal subunit. Forms a cluster with proteins L14 and L19.

Functionally, one of the primary rRNA binding proteins, it binds directly near the 3'-end of the 23S rRNA, where it nucleates assembly of the 50S subunit. In Limosilactobacillus reuteri (strain DSM 20016) (Lactobacillus reuteri), this protein is Large ribosomal subunit protein uL3.